We begin with the raw amino-acid sequence, 434 residues long: Flagellum-specific ATP synthase (434 aa).

164-171 (AGSGVGKS) contacts ATP.

The protein belongs to the ATPase alpha/beta chains family.

The protein localises to the cytoplasm. It carries out the reaction ATP + H2O + 4 H(+)(in) = ADP + phosphate + 5 H(+)(out). In terms of biological role, probable catalytic subunit of a protein translocase for flagellum-specific export, or a proton translocase involved in local circuits at the flagellum. The chain is Flagellum-specific ATP synthase (fliI) from Helicobacter pylori (strain ATCC 700392 / 26695) (Campylobacter pylori).